Consider the following 596-residue polypeptide: Arginine--tRNA ligase (596 aa).

Residues 135 to 145 (ANPTGPIHIGG) carry the 'HIGH' region motif. Positions 227–249 (PRVDGGADQDGNPLGEGDSEQRE) are disordered.

The protein belongs to the class-I aminoacyl-tRNA synthetase family. Monomer.

The protein resides in the cytoplasm. The enzyme catalyses tRNA(Arg) + L-arginine + ATP = L-arginyl-tRNA(Arg) + AMP + diphosphate. The protein is Arginine--tRNA ligase of Bifidobacterium adolescentis (strain ATCC 15703 / DSM 20083 / NCTC 11814 / E194a).